A 304-amino-acid chain; its full sequence is tRNA-uridine aminocarboxypropyltransferase 1 (304 aa).

Disordered stretches follow at residues 1-29 (MALSPSVVPQESKEDNANCVETKPSQTTS) and 165-193 (RNKADNLDVPPRKLKRTTDEEGWDLHEST). Residues 180-193 (RTTDEEGWDLHEST) show a composition bias toward basic and acidic residues. The short motif at 206–209 (DSTW) is the DXTW element.

This sequence belongs to the TDD superfamily. DTWD1 family.

The protein localises to the nucleus. It catalyses the reaction a uridine in tRNA + S-adenosyl-L-methionine = a 3-[(3S)-3-amino-3-carboxypropyl]uridine in tRNA + S-methyl-5'-thioadenosine + H(+). Functionally, catalyzes the formation of 3-(3-amino-3-carboxypropyl)uridine (acp3U) at position 20 in the D-loop of several cytoplasmic tRNAs (acp3U(20)). The polypeptide is tRNA-uridine aminocarboxypropyltransferase 1 (Mus musculus (Mouse)).